Consider the following 407-residue polypeptide: Aminoacylase-1 (407 aa).

Ala-2 is subject to N-acetylalanine. A Zn(2+)-binding site is contributed by His-80. Residue Asp-82 is part of the active site. Asp-113 is a Zn(2+) binding site. Glu-147 functions as the Proton acceptor in the catalytic mechanism. Residues Glu-148, Glu-175, and His-372 each coordinate Zn(2+).

This sequence belongs to the peptidase M20A family. In terms of assembly, homodimer. Interacts with SPHK1. Zn(2+) is required as a cofactor.

It is found in the cytoplasm. The enzyme catalyses an N-acyl-L-amino acid + H2O = an L-alpha-amino acid + a carboxylate. It carries out the reaction N-acetyl-L-methionine + H2O = L-methionine + acetate. It catalyses the reaction N-acetyl-L-glutamine + H2O = L-glutamine + acetate. Catalyzes the hydrolysis of N-acetylated amino acids to acetate and free amino acids. The polypeptide is Aminoacylase-1 (ACY1) (Sus scrofa (Pig)).